The following is a 319-amino-acid chain: Acetyl esterase (319 aa).

An Involved in the stabilization of the negatively charged intermediate by the formation of the oxyanion hole motif is present at residues 91-93 (HGG). Residues Ser165, Asp262, and His292 contribute to the active site.

The protein belongs to the 'GDXG' lipolytic enzyme family. Homodimer. Interacts with MalT and MelA.

It is found in the cytoplasm. Functionally, displays esterase activity towards short chain fatty esters (acyl chain length of up to 8 carbons). Able to hydrolyze triacetylglycerol (triacetin) and tributyrylglycerol (tributyrin), but not trioleylglycerol (triolein) or cholesterol oleate. Negatively regulates MalT activity by antagonizing maltotriose binding. Inhibits MelA galactosidase activity. This is Acetyl esterase from Shigella flexneri serotype 5b (strain 8401).